Consider the following 398-residue polypeptide: Probable transcription factor PosF21 (398 aa).

Disordered stretches follow at residues 1-46 (MDKE…HDIS) and 112-150 (ATSSAQVGEPSGTAWKNETMMQTGTGSTSNPQNTVNSLG). Pro residues predominate over residues 7–19 (PAPPCGGLPPPSP). Polar residues predominate over residues 125-148 (AWKNETMMQTGTGSTSNPQNTVNS). Positions 201 to 264 (DPKRAKRIWA…NGLTVENNEL (64 aa)) constitute a bZIP domain. The basic motif stretch occupies residues 203 to 224 (KRAKRIWANRQSAARSKERKTR). Positions 229-264 (LERKVQTLQTEATTLSAQLTLLQRDTNGLTVENNEL) are leucine-zipper.

This sequence belongs to the bZIP family.

The protein resides in the nucleus. Its function is as follows. Putative transcription factor with an activatory role. The protein is Probable transcription factor PosF21 (POSF21) of Arabidopsis thaliana (Mouse-ear cress).